Consider the following 357-residue polypeptide: 3-dehydroquinate synthase (357 aa).

NAD(+) contacts are provided by residues Gly104–Asp108, Thr128–Thr129, Lys141, and Phe168–Thr171. The Zn(2+) site is built by Glu183, His243, and His260.

This sequence belongs to the sugar phosphate cyclases superfamily. Dehydroquinate synthase family. Requires Co(2+) as cofactor. Zn(2+) serves as cofactor. The cofactor is NAD(+).

The protein resides in the cytoplasm. The enzyme catalyses 7-phospho-2-dehydro-3-deoxy-D-arabino-heptonate = 3-dehydroquinate + phosphate. Its pathway is metabolic intermediate biosynthesis; chorismate biosynthesis; chorismate from D-erythrose 4-phosphate and phosphoenolpyruvate: step 2/7. Its function is as follows. Catalyzes the conversion of 3-deoxy-D-arabino-heptulosonate 7-phosphate (DAHP) to dehydroquinate (DHQ). The protein is 3-dehydroquinate synthase of Streptococcus pyogenes serotype M5 (strain Manfredo).